We begin with the raw amino-acid sequence, 472 residues long: Zinc finger and BTB domain-containing protein 18.2 (472 aa).

The region spanning 24–91 (CDCTVLVGEA…MYEGKLEFSN (68 aa)) is the BTB domain. A compositionally biased stretch (basic and acidic residues) spans 127-149 (KIIDDGEKDDKPVDSEEHHEHSF). Disordered regions lie at residues 127–155 (KIIDDGEKDDKPVDSEEHHEHSFDASQQK), 197–236 (AGKTKANDSSPSSPLSQRSANHTHPPSDRDGALDLSFKPM), and 269–334 (DLLS…LSTS). Low complexity predominate over residues 205–215 (SSPSSPLSQRS). A compositionally biased stretch (polar residues) spans 279-288 (AKSPKSQQVG). Basic and acidic residues predominate over residues 309 to 319 (HTREDDLYQDR). 4 consecutive C2H2-type zinc fingers follow at residues 344–366 (CICPLCSKVFPSPHILQLHLSSH), 384–406 (PTCTICGKTFSCMYTLKRHERTH), 412–434 (FTCGQCGKSFQYSHNLSRHAVVH), and 440–463 (HACKWCERRFTQSGDLYRHIRKFH).

This sequence belongs to the krueppel C2H2-type zinc-finger protein family. ZBTB18 subfamily.

Its subcellular location is the nucleus. Its function is as follows. Transcriptional repressor that plays a role in various developmental processes. Specifically binds the consensus DNA sequence 5'-[AC]ACATCTG[GT][AC]-3' which contains the E box core, and acts by recruiting chromatin remodeling multiprotein complexes. In Xenopus laevis (African clawed frog), this protein is Zinc finger and BTB domain-containing protein 18.2 (zbtb18.2).